The following is a 717-amino-acid chain: MIHAGNAITVQMLADGIAEFRFDLQGESVNKFNRATIEDFKAAIAAVKANNDIKGLVVTSGKSTFIVGADITEFGQNFAQGEKAIVDWLMPVHEIFNSFEDLDLPKVAAINGMALGGGFEMCLVCDYRVMSEAAQVGLPEIKLGIYPGFGGSVRLSRLIGIDNAVEWMAMATPKKPAAALKDGAVDAVVAADKLLDAATDLVKQAISGRLNWKAKRQEKLEAVKLNPLEQMMAFNTAKGAVLAKANPAQYPAPKLLLDSLQAGASLARDEALKAEAEGFAKAAVTPQAEALIGLFINDQVVKKASKQHEKGAHPVNQAAVLGAGIMGGGIAYQAASKGTPIIMKDIGNPQLALGMKEANNLLTKQVERKKMKPAQMGETLARIRPTLSYEEFKEVDIVIEAVTENPKVKEIVLAETEKNVRENTIIASNTSTISITRLAKALQRPENFVGMHFFNPVHMMPLVEVIRGEKTSEEAIATTVVLAQKMGKTPIVVNDCPGFLVNRVLFPYFGAFDLLVKDGADFQQIDNVMSKFGWPMGPAYLIDVVGIDTGVHGAEVMAEGFPDRMKPDYKGAIEAMYEAKRLGQKNDVGFYKYELDKKGKKAKTVDPTAYEVIAPFVTGEKREFDNQEIIDRMMLALCNETVRCLEDNIVATASEADMAMIMGIGFPPFRGGPCRYIDQTGVAEYVALCDKYAHLGKAYEAPQMLRDMAANNKKFYG.

The tract at residues 1–190 (MIHAGNAITV…KDGAVDAVVA (190 aa)) is enoyl-CoA hydratase/isomerase. Asp298 contributes to the substrate binding site. The tract at residues 313–717 (HPVNQAAVLG…MAANNKKFYG (405 aa)) is 3-hydroxyacyl-CoA dehydrogenase. Residues Met326, Asp345, 402-404 (VTE), Lys409, and Ser431 each bind NAD(+). Catalysis depends on His452, which acts as the For 3-hydroxyacyl-CoA dehydrogenase activity. Asn455 is a binding site for NAD(+). Asn502 contributes to the substrate binding site.

The protein in the N-terminal section; belongs to the enoyl-CoA hydratase/isomerase family. This sequence in the C-terminal section; belongs to the 3-hydroxyacyl-CoA dehydrogenase family. In terms of assembly, heterotetramer of two alpha chains (FadB) and two beta chains (FadA).

The catalysed reaction is a (3S)-3-hydroxyacyl-CoA + NAD(+) = a 3-oxoacyl-CoA + NADH + H(+). The enzyme catalyses a (3S)-3-hydroxyacyl-CoA = a (2E)-enoyl-CoA + H2O. It catalyses the reaction a 4-saturated-(3S)-3-hydroxyacyl-CoA = a (3E)-enoyl-CoA + H2O. It carries out the reaction (3S)-3-hydroxybutanoyl-CoA = (3R)-3-hydroxybutanoyl-CoA. The catalysed reaction is a (3Z)-enoyl-CoA = a 4-saturated (2E)-enoyl-CoA. The enzyme catalyses a (3E)-enoyl-CoA = a 4-saturated (2E)-enoyl-CoA. It participates in lipid metabolism; fatty acid beta-oxidation. In terms of biological role, involved in the aerobic and anaerobic degradation of long-chain fatty acids via beta-oxidation cycle. Catalyzes the formation of 3-oxoacyl-CoA from enoyl-CoA via L-3-hydroxyacyl-CoA. It can also use D-3-hydroxyacyl-CoA and cis-3-enoyl-CoA as substrate. This chain is Fatty acid oxidation complex subunit alpha, found in Acinetobacter baumannii (strain ACICU).